The sequence spans 314 residues: Endo-beta-N-acetylglucosaminidase (314 aa).

The first 47 residues, 1 to 47, serve as a signal peptide directing secretion; it reads MQFGIVAAIADGGRTARAGGSVRPPRRPPASHTAWGLPRGRPTGQPH. The disordered stretch occupies residues 14-54; it reads RTARAGGSVRPPRRPPASHTAWGLPRGRPTGQPHATPTKSG. Residues 55-309 enclose the GH18 domain; sequence PTSIAYVEVN…SSMTKVLYGQ (255 aa). Catalysis depends on glutamate 175, which acts as the Proton donor.

This sequence belongs to the glycosyl hydrolase 18 family. Monomer.

Its subcellular location is the secreted. The enzyme catalyses an N(4)-(oligosaccharide-(1-&gt;3)-[oligosaccharide-(1-&gt;6)]-beta-D-Man-(1-&gt;4)-beta-D-GlcNAc-(1-&gt;4)-alpha-D-GlcNAc)-L-asparaginyl-[protein] + H2O = an oligosaccharide-(1-&gt;3)-[oligosaccharide-(1-&gt;6)]-beta-D-Man-(1-&gt;4)-D-GlcNAc + N(4)-(N-acetyl-beta-D-glucosaminyl)-L-asparaginyl-[protein]. In terms of biological role, cleaves asparagine-linked oligomannose and hybrid, but not complex, oligosaccharides from glycoproteins. This chain is Endo-beta-N-acetylglucosaminidase, found in Flavobacterium sp. (strain SK1022).